The chain runs to 293 residues: ATP synthase gamma chain (293 aa).

This sequence belongs to the ATPase gamma chain family. As to quaternary structure, F-type ATPases have 2 components, CF(1) - the catalytic core - and CF(0) - the membrane proton channel. CF(1) has five subunits: alpha(3), beta(3), gamma(1), delta(1), epsilon(1). CF(0) has three main subunits: a, b and c.

Its subcellular location is the cell inner membrane. In terms of biological role, produces ATP from ADP in the presence of a proton gradient across the membrane. The gamma chain is believed to be important in regulating ATPase activity and the flow of protons through the CF(0) complex. In Sinorhizobium fredii (strain NBRC 101917 / NGR234), this protein is ATP synthase gamma chain.